The chain runs to 455 residues: 3-phosphoshikimate 1-carboxyvinyltransferase (455 aa).

Over residues 1-19 the composition is skewed to polar residues; sequence MSHGASSRPATARKSSGLS. The segment at 1–25 is disordered; that stretch reads MSHGASSRPATARKSSGLSGTVRIP. Lys28 lines the phosphoenolpyruvate pocket. 3-phosphoshikimate-binding residues include Ser29 and Arg33. Arg128 is a binding site for phosphoenolpyruvate. Residues Ser173, Ala174, Gln175, Asp326, and Lys353 each coordinate 3-phosphoshikimate. Phosphoenolpyruvate is bound at residue Gln175. The active-site Proton acceptor is the Asp326. Arg357 and Arg405 together coordinate phosphoenolpyruvate.

Belongs to the EPSP synthase family. Monomer.

The protein localises to the cytoplasm. It carries out the reaction 3-phosphoshikimate + phosphoenolpyruvate = 5-O-(1-carboxyvinyl)-3-phosphoshikimate + phosphate. The protein operates within metabolic intermediate biosynthesis; chorismate biosynthesis; chorismate from D-erythrose 4-phosphate and phosphoenolpyruvate: step 6/7. With respect to regulation, is resistant to inhibition by glyphosate (glyphosate-tolerant) like other members of class II EPSPS, in contrast to class I EPSPS, which is glyphosate-sensitive. Is much less sensitive to inhibition by the (R)-difluoromethyl and (R)-phosphonate analogs of the tetrahedral reaction intermediate than the representative class I EPSPS from E.coli. Is highly activated in the presence of cations, such as NH4(+), Rb(+), and K(+). Catalyzes the transfer of the enolpyruvyl moiety of phosphoenolpyruvate (PEP) to the 5-hydroxyl of shikimate-3-phosphate (S3P) to produce enolpyruvyl shikimate-3-phosphate and inorganic phosphate. In Agrobacterium sp. (strain CP4), this protein is 3-phosphoshikimate 1-carboxyvinyltransferase.